Here is a 1091-residue protein sequence, read N- to C-terminus: Constitutive coactivator of PPAR-gamma-like protein 2 (1091 aa).

Over residues 35–53 (QQQHLHRQLPPAALAPGAP) the composition is skewed to low complexity. Disordered stretches follow at residues 35 to 105 (QQQH…HPPP), 503 to 575 (NCLT…SEPH), 966 to 1010 (SRSS…QGSS), and 1037 to 1077 (VEEK…KNHV). At Arg57 the chain carries Omega-N-methylarginine. The span at 82 to 95 (SRHHHPAHHFHHHG) shows a compositional bias: basic residues. A compositionally biased stretch (polar residues) spans 532–544 (GSEQITEAVQQQP). Positions 966-976 (SRSSRSRGSFG) are enriched in low complexity. Arg972 carries the omega-N-methylarginine modification. The segment covering 1062-1077 (SDDHCLPVKNGEKNHV) has biased composition (basic and acidic residues).

This sequence belongs to the constitutive coactivator of PPAR-gamma family.

The sequence is that of Constitutive coactivator of PPAR-gamma-like protein 2 (Fam120c) from Mus musculus (Mouse).